The chain runs to 585 residues: Arginine--tRNA ligase (585 aa).

The 'HIGH' region motif lies at 131–141 (ANPTGPMHVGH).

This sequence belongs to the class-I aminoacyl-tRNA synthetase family. As to quaternary structure, monomer.

The protein resides in the cytoplasm. It carries out the reaction tRNA(Arg) + L-arginine + ATP = L-arginyl-tRNA(Arg) + AMP + diphosphate. This is Arginine--tRNA ligase from Bartonella henselae (strain ATCC 49882 / DSM 28221 / CCUG 30454 / Houston 1) (Rochalimaea henselae).